Consider the following 89-residue polypeptide: Large ribosomal subunit protein eL31 (89 aa).

This sequence belongs to the eukaryotic ribosomal protein eL31 family.

The protein is Large ribosomal subunit protein eL31 of Picrophilus torridus (strain ATCC 700027 / DSM 9790 / JCM 10055 / NBRC 100828 / KAW 2/3).